We begin with the raw amino-acid sequence, 121 residues long: Met-lysine-1a (121 aa).

A signal peptide spans 1–22 (MKSFVFALALIVAFACISESKS). The propeptide occupies 23-69 (DHTGYEEEENLEDSELTDLVTAALLEELAEASEMDDLSYTEEAGGER). A Methionine amide modification is found at M120.

In terms of tissue distribution, expressed by the venom gland.

It is found in the secreted. Functionally, shows no antimicrobial activity against Gram-positive bacterium B.subtilis B-501 or Gram-negative bacterium E.coli DH5-alpha at concentrations up to 20 ug/ml. Shows no toxicity towards insect (S.carnaria) larvae. This Lachesana tarabaevi (Spider) protein is Met-lysine-1a.